The sequence spans 433 residues: Ligand-dependent corepressor (433 aa).

The segment at 1–51 (MQRMIQQFAAEYTSKNSSTQDPSQPNSTKNQSLPKASPVTTSPTAATTQNP) is disordered. Polar residues predominate over residues 13–34 (TSKNSSTQDPSQPNSTKNQSLP). Residues 36 to 48 (ASPVTTSPTAATT) show a composition bias toward low complexity. Phosphoserine is present on S42. Residues 53–57 (LSKLL) carry the Interaction with nuclear receptors motif. Residue S63 is modified to Phosphoserine. The interval 64–147 (PLDLTVRKSQ…GTREGFGHST (84 aa)) is disordered. A compositionally biased stretch (polar residues) spans 93 to 110 (AGSTSLSHSPGCSSTQGN). S249 is subject to Phosphoserine. Residue K254 forms a Glycyl lysine isopeptide (Lys-Gly) (interchain with G-Cter in SUMO2) linkage. A disordered region spans residues 299-348 (QSRKSMLDAGPDSWGSDAEQSTSGQPYPTSDQEGDPGSKQPRKKRGRYRQ). Residues 316 to 329 (AEQSTSGQPYPTSD) are compositionally biased toward polar residues. The short motif at 339–345 (PRKKRGR) is the Nuclear localization signal element. Residues 340 to 392 (RKKRGRYRQYNSEILEEAISVVMSGKMSVSKAQSIYGIPHSTLEYKVKERLGT) form the HTH psq-type domain. R345 participates in a covalent cross-link: Glycyl lysine isopeptide (Lys-Gly) (interchain with G-Cter in SUMO2). The segment at residues 368–388 (VSKAQSIYGIPHSTLEYKVKE) is a DNA-binding region (H-T-H motif). A Glycyl lysine isopeptide (Lys-Gly) (interchain with G-Cter in SUMO2) cross-link involves residue G391. The tract at residues 393 to 412 (LKNPPKKKMKLMRSEGPDVS) is disordered. A Glycyl lysine isopeptide (Lys-Gly) (interchain with G-Cter in SUMO2) cross-link involves residue K414.

As to quaternary structure, interacts with ESR1 and ESR2 in the presence of estradiol. Interacts with CTBP1, HDAC3 and HDAC6. Component of a large corepressor complex that contains about 20 proteins, including CTBP1, CTBP2, HDAC1 and HDAC2. In terms of tissue distribution, ubiquitous.

Its subcellular location is the nucleus. Its function is as follows. May act as transcription activator that binds DNA elements with the sequence 5'-CCCTATCGATCGATCTCTACCT-3'. Repressor of ligand-dependent transcription activation by target nuclear receptors. Repressor of ligand-dependent transcription activation by ESR1, ESR2, NR3C1, PGR, RARA, RARB, RARG, RXRA and VDR. The chain is Ligand-dependent corepressor from Homo sapiens (Human).